We begin with the raw amino-acid sequence, 221 residues long: Putative N-acetylmannosamine-6-phosphate 2-epimerase (221 aa).

Belongs to the NanE family.

The catalysed reaction is an N-acyl-D-glucosamine 6-phosphate = an N-acyl-D-mannosamine 6-phosphate. Its pathway is amino-sugar metabolism; N-acetylneuraminate degradation; D-fructose 6-phosphate from N-acetylneuraminate: step 3/5. Converts N-acetylmannosamine-6-phosphate (ManNAc-6-P) to N-acetylglucosamine-6-phosphate (GlcNAc-6-P). This is Putative N-acetylmannosamine-6-phosphate 2-epimerase from Clostridium perfringens (strain ATCC 13124 / DSM 756 / JCM 1290 / NCIMB 6125 / NCTC 8237 / Type A).